Reading from the N-terminus, the 171-residue chain is S-ribosylhomocysteine lyase (171 aa).

Residues histidine 54, histidine 58, and cysteine 128 each coordinate Fe cation.

It belongs to the LuxS family. As to quaternary structure, homodimer. Requires Fe cation as cofactor.

The catalysed reaction is S-(5-deoxy-D-ribos-5-yl)-L-homocysteine = (S)-4,5-dihydroxypentane-2,3-dione + L-homocysteine. In terms of biological role, involved in the synthesis of autoinducer 2 (AI-2) which is secreted by bacteria and is used to communicate both the cell density and the metabolic potential of the environment. The regulation of gene expression in response to changes in cell density is called quorum sensing. Catalyzes the transformation of S-ribosylhomocysteine (RHC) to homocysteine (HC) and 4,5-dihydroxy-2,3-pentadione (DPD). This Escherichia fergusonii (strain ATCC 35469 / DSM 13698 / CCUG 18766 / IAM 14443 / JCM 21226 / LMG 7866 / NBRC 102419 / NCTC 12128 / CDC 0568-73) protein is S-ribosylhomocysteine lyase.